The primary structure comprises 500 residues: Glycerol kinase (500 aa).

Residue Thr-13 participates in ADP binding. Residues Thr-13, Thr-14, and Ser-15 each coordinate ATP. Thr-13 is a binding site for sn-glycerol 3-phosphate. Arg-17 is an ADP binding site. Arg-83, Glu-84, Tyr-135, and Asp-244 together coordinate sn-glycerol 3-phosphate. Glycerol-binding residues include Arg-83, Glu-84, Tyr-135, Asp-244, and Gln-245. ADP-binding residues include Thr-266 and Gly-309. Residues Thr-266, Gly-309, Gln-313, and Gly-410 each coordinate ATP. The ADP site is built by Gly-410 and Asn-414.

It belongs to the FGGY kinase family.

It catalyses the reaction glycerol + ATP = sn-glycerol 3-phosphate + ADP + H(+). It functions in the pathway polyol metabolism; glycerol degradation via glycerol kinase pathway; sn-glycerol 3-phosphate from glycerol: step 1/1. Its activity is regulated as follows. Inhibited by fructose 1,6-bisphosphate (FBP). Functionally, key enzyme in the regulation of glycerol uptake and metabolism. Catalyzes the phosphorylation of glycerol to yield sn-glycerol 3-phosphate. The sequence is that of Glycerol kinase from Burkholderia pseudomallei (strain K96243).